Consider the following 71-residue polypeptide: Protein SlyX homolog (71 aa).

The protein belongs to the SlyX family.

The polypeptide is Protein SlyX homolog (Rhodospirillum rubrum (strain ATCC 11170 / ATH 1.1.1 / DSM 467 / LMG 4362 / NCIMB 8255 / S1)).